A 428-amino-acid chain; its full sequence is Glucose-1-phosphate adenylyltransferase (428 aa).

Residues Y114, G179, E194–K195, and S212 contribute to the alpha-D-glucose 1-phosphate site.

Belongs to the bacterial/plant glucose-1-phosphate adenylyltransferase family. As to quaternary structure, homotetramer.

The enzyme catalyses alpha-D-glucose 1-phosphate + ATP + H(+) = ADP-alpha-D-glucose + diphosphate. Its pathway is glycan biosynthesis; glycogen biosynthesis. In terms of biological role, involved in the biosynthesis of ADP-glucose, a building block required for the elongation reactions to produce glycogen. Catalyzes the reaction between ATP and alpha-D-glucose 1-phosphate (G1P) to produce pyrophosphate and ADP-Glc. The protein is Glucose-1-phosphate adenylyltransferase of Yersinia pseudotuberculosis serotype O:1b (strain IP 31758).